We begin with the raw amino-acid sequence, 905 residues long: MKKLSSAAIREQFLRFFEERGHVRVPSSSLIPGNDPTLLFTNSGMVQFKDTFLGLEQRPYTRATTVQKCLRVSGKHNDLEEVGPSPRHHTFFEMLGNFSFGDYFKSEAIPMAWELLTKVFELPVERLWFTVFEGDDEVPPDDEAAQLWVAAGADPDRVLRFGRKDNFWVMADTGPCGPCSEITIYIGDDLRAMSAQGVNSDDPNYVEIWNNVFMQFERSTMQPLHRPSVDTGMGLERMAMVMQGVHSTYETDLFIPLIERQLALLGADESTYRARVAPYRAVADHSRAVAFLIADGVLPGNTGRSYVLRRILRRAVYQGRTVGFEKPFLAEIVAAVIEQMGAVYPELRERADFILETVDLEERQFLRTLSGGMSILNSVIERVRASGSTVIPGDDAFTLKDTYGFPLDLTQKIAAEHGLTVDEAGYERRMEEQRDRGRRAAQFKRAAEAEVWAGIDLPPTRFTGYAAVSGSGVVQAIVVAGDQVAEASAGQQVQIALDSTPFYAESGGQVGDTGVLIGPRGRVRVEDVQRPVPGVIVHYGVVESGSVMLHDPVDAHVDSGRRAAIMRNHTATHLLHRALRDVLGEHAAQAGSLVAPDRLRFDFTHTRPLTPEQLHEIERRVNAWIRADTPVVWQELSYQAAIEAGAIALFGEKYGDVVRMVTIGCVNGHDAPSPAALAERELAGFPMCSRELCGGTHVGRSGEIGLFRIISESSVAAGVRRIEALTGPEAEAWVDAQIATLQAVAARVGAPQTQLVERVEALIAELKQRQRALDELTARMARSNLEGLLASVQSVGDIRFLAAQVEAPNAARLREMGDWLRDKLGSGVVVLATVFDGKAQILAMATPDLAGKRIHAGNLVKALAPIVGGSGGGRPDMAQAGGRDSAKIPQALEHVAAVIAAQAGV.

Residues His-569, His-573, Cys-693, and His-697 each contribute to the Zn(2+) site.

This sequence belongs to the class-II aminoacyl-tRNA synthetase family. The cofactor is Zn(2+).

It is found in the cytoplasm. The catalysed reaction is tRNA(Ala) + L-alanine + ATP = L-alanyl-tRNA(Ala) + AMP + diphosphate. In terms of biological role, catalyzes the attachment of alanine to tRNA(Ala) in a two-step reaction: alanine is first activated by ATP to form Ala-AMP and then transferred to the acceptor end of tRNA(Ala). Also edits incorrectly charged Ser-tRNA(Ala) and Gly-tRNA(Ala) via its editing domain. The protein is Alanine--tRNA ligase of Roseiflexus sp. (strain RS-1).